Consider the following 241-residue polypeptide: Prolactin-8A8 (241 aa).

The first 30 residues, 1-30 (MELQFRQPHFSDALLLLLLSNLLLWEKASS), serve as a signal peptide directing secretion. Disulfide bonds link cysteine 34-cysteine 41, cysteine 101-cysteine 217, and cysteine 234-cysteine 241. Asparagine 213 carries N-linked (GlcNAc...) asparagine glycosylation.

Belongs to the somatotropin/prolactin family. In terms of tissue distribution, expressed specifically in the placenta. Predominantly expressed in spongiotrophoblast cells.

The protein localises to the secreted. This is Prolactin-8A8 (Prl8a8) from Mus musculus (Mouse).